The chain runs to 659 residues: Alpha-amylase (659 aa).

The N-terminal stretch at 1 to 27 (MFAKRFKTSLLPLFAGFLLLFHLVLAG) is a signal peptide. A propeptide spanning residues 28–41 (PAAASAETANKSNE) is cleaved from the precursor. The Ca(2+) site is built by asparagine 142, threonine 178, aspartate 187, glycine 210, and aspartate 212. Aspartate 217 acts as the Nucleophile in catalysis. Histidine 221 is a Ca(2+) binding site. Glutamate 249 functions as the Proton donor in the catalytic mechanism.

It belongs to the glycosyl hydrolase 13 family. In terms of assembly, monomer. Requires Ca(2+) as cofactor.

The protein resides in the secreted. It catalyses the reaction Endohydrolysis of (1-&gt;4)-alpha-D-glucosidic linkages in polysaccharides containing three or more (1-&gt;4)-alpha-linked D-glucose units.. This is Alpha-amylase (amyE) from Bacillus subtilis (strain 168).